Here is a 422-residue protein sequence, read N- to C-terminus: Serine hydroxymethyltransferase (422 aa).

(6S)-5,6,7,8-tetrahydrofolate contacts are provided by residues Leu-113 and 117–119 (GHL). N6-(pyridoxal phosphate)lysine is present on Lys-222.

The protein belongs to the SHMT family. In terms of assembly, homodimer. The cofactor is pyridoxal 5'-phosphate.

The protein localises to the cytoplasm. It catalyses the reaction (6R)-5,10-methylene-5,6,7,8-tetrahydrofolate + glycine + H2O = (6S)-5,6,7,8-tetrahydrofolate + L-serine. It participates in one-carbon metabolism; tetrahydrofolate interconversion. It functions in the pathway amino-acid biosynthesis; glycine biosynthesis; glycine from L-serine: step 1/1. In terms of biological role, catalyzes the reversible interconversion of serine and glycine with tetrahydrofolate (THF) serving as the one-carbon carrier. This reaction serves as the major source of one-carbon groups required for the biosynthesis of purines, thymidylate, methionine, and other important biomolecules. Also exhibits THF-independent aldolase activity toward beta-hydroxyamino acids, producing glycine and aldehydes, via a retro-aldol mechanism. The protein is Serine hydroxymethyltransferase of Amoebophilus asiaticus (strain 5a2).